A 60-amino-acid chain; its full sequence is Large ribosomal subunit protein uL30 (60 aa).

The protein belongs to the universal ribosomal protein uL30 family. In terms of assembly, part of the 50S ribosomal subunit.

The chain is Large ribosomal subunit protein uL30 from Cutibacterium acnes (strain DSM 16379 / KPA171202) (Propionibacterium acnes).